The primary structure comprises 484 residues: MIQVLLVTICLAVFPYQGSSIILESGNVNDYEVVYPEKVTALPKGAVQQKYEDAMQYEFKVNGEPVVLYLEKNKELFSENYSETHYSLDGREITTYPSVEDHCYYHGRIQNDADSTASISACNGLKGHFKLRGKTYLIEPLKLPNSEAHAVFKYENVEKEDEAPQMCGVTETNWESDLPIKKTSQLNLPLLEKRCIELVMVADHRMYTKYDGDKTEISSKIYEIANNLNVDYRPMKIRVALIGTEIWSTGNLSKVTLSADETLDSFGEWRERDLLKRKSHDNVQLLTGMIFNEKIEGRAYNKSMCDPKRSVGIVRDHRTRPHLVANRMAHGLGHNLGIHHDGDSCSCGANSCIMSATVSNEPSSRFSDCSLNQYSNDIIYNPWTSYCLYNEPSKTDIVSPPVCGNYYLEVGEDCDCGPPANCQNPCCDATTCKLTPGSQCAEGLCCAQCKFIEEGTVCRVAKGDWNDDHCTGQSGDCPWIGYYG.

Residues 1–20 form the signal peptide; sequence MIQVLLVTICLAVFPYQGSS. A propeptide spanning residues 21 to 191 is cleaved from the precursor; sequence IILESGNVND…KTSQLNLPLL (171 aa). Residues Asn80, Asn251, and Asn301 are each glycosylated (N-linked (GlcNAc...) asparagine). One can recognise a Peptidase M12B domain in the interval 194–392; that stretch reads RCIELVMVAD…WTSYCLYNEP (199 aa). 10 cysteine pairs are disulfide-bonded: Cys305–Cys387, Cys345–Cys369, Cys347–Cys352, Cys403–Cys422, Cys414–Cys432, Cys416–Cys427, Cys426–Cys449, Cys440–Cys446, Cys445–Cys470, and Cys458–Cys477. One can recognise a Disintegrin domain in the interval 400–484; that stretch reads PPVCGNYYLE…GDCPWIGYYG (85 aa). Positions 462–464 match the Cell attachment site; atypical (KGD) motif; that stretch reads KGD.

The protein belongs to the venom metalloproteinase (M12B) family. P-II subfamily. P-IIb sub-subfamily. Homodimer; disulfide-linked (disintegrin). As to expression, expressed by the venom gland.

It localises to the secreted. Its function is as follows. The function of this complete protein has not been studied, but it may be similar to the function of the disintegrin domain. A recombinant protein of this domain (409-484) inhibits collagen-induced human platelet aggregation, without having effect on ADP-induced aggregation. It may act either by blocking the binding of fibrinogen to the platelet receptor GPIIb/GPIIIa (ITGA2B/ITGB3) or by blocking the binding of collagen to the integrin alpha-2/beta-1 complex (ITGA2/ITGB1). The protein is Zinc metalloproteinase homolog-disintegrin albolatin of Trimeresurus albolabris (White-lipped pit viper).